A 78-amino-acid chain; its full sequence is Putative DNA-binding protein MT0521 (78 aa).

The H-T-H motif DNA-binding region spans leucine 24–valine 45.

This chain is Putative DNA-binding protein MT0521, found in Mycobacterium tuberculosis (strain CDC 1551 / Oshkosh).